Consider the following 329-residue polypeptide: Malate dehydrogenase (329 aa).

12–18 is an NAD(+) binding site; it reads GAAGQIG. Substrate contacts are provided by arginine 95 and arginine 101. NAD(+) is bound by residues asparagine 108, glutamine 115, and 132–134; that span reads VGN. Residues asparagine 134 and arginine 165 each contribute to the substrate site. Histidine 190 (proton acceptor) is an active-site residue.

Belongs to the LDH/MDH superfamily. MDH type 2 family.

It catalyses the reaction (S)-malate + NAD(+) = oxaloacetate + NADH + H(+). Catalyzes the reversible oxidation of malate to oxaloacetate. The chain is Malate dehydrogenase from Polynucleobacter asymbioticus (strain DSM 18221 / CIP 109841 / QLW-P1DMWA-1) (Polynucleobacter necessarius subsp. asymbioticus).